A 372-amino-acid chain; its full sequence is Queuine tRNA-ribosyltransferase (372 aa).

Catalysis depends on Asp92, which acts as the Proton acceptor. Substrate-binding positions include 92–96, Asp146, Gln188, and Gly215; that span reads DSGGY. Residues 246-252 form an RNA binding region; that stretch reads GIGSLRE. The Nucleophile role is filled by Asp265. An RNA binding; important for wobble base 34 recognition region spans residues 270–274; the sequence is TRLGR. Zn(2+)-binding residues include Cys303, Cys305, Cys308, and His334.

It belongs to the queuine tRNA-ribosyltransferase family. Homodimer. Within each dimer, one monomer is responsible for RNA recognition and catalysis, while the other monomer binds to the replacement base PreQ1. The cofactor is Zn(2+).

It carries out the reaction 7-aminomethyl-7-carbaguanine + guanosine(34) in tRNA = 7-aminomethyl-7-carbaguanosine(34) in tRNA + guanine. It functions in the pathway tRNA modification; tRNA-queuosine biosynthesis. Its function is as follows. Catalyzes the base-exchange of a guanine (G) residue with the queuine precursor 7-aminomethyl-7-deazaguanine (PreQ1) at position 34 (anticodon wobble position) in tRNAs with GU(N) anticodons (tRNA-Asp, -Asn, -His and -Tyr). Catalysis occurs through a double-displacement mechanism. The nucleophile active site attacks the C1' of nucleotide 34 to detach the guanine base from the RNA, forming a covalent enzyme-RNA intermediate. The proton acceptor active site deprotonates the incoming PreQ1, allowing a nucleophilic attack on the C1' of the ribose to form the product. After dissociation, two additional enzymatic reactions on the tRNA convert PreQ1 to queuine (Q), resulting in the hypermodified nucleoside queuosine (7-(((4,5-cis-dihydroxy-2-cyclopenten-1-yl)amino)methyl)-7-deazaguanosine). This chain is Queuine tRNA-ribosyltransferase, found in Prochlorococcus marinus (strain MIT 9211).